The primary structure comprises 2186 residues: Non-reducing polyketide synthase men2 (2186 aa).

In terms of domain architecture, Starter acyltransferase (SAT) spans 16–255 (FFGDQTVDAL…MQLPLGTPAH (240 aa)). The Ketosynthase family 3 (KS3) domain maps to 382 to 815 (SNLIAVVGQS…GGNNCVLLEE (434 aa)). Active-site for beta-ketoacyl synthase activity residues include Cys554, His690, and His729. Residues 914-1204 (VFAFTGQGAQ…SSLVKSTLSA (291 aa)) form the Malonyl-CoA:ACP transacylase (MAT) domain. The interval 1299–1623 (TASLQQVRSE…TRRVLATVLG (325 aa)) is product template (PT) domain. Residues 1303 to 1434 (QQVRSEQING…CKLHFDKRGS (132 aa)) form an N-terminal hotdog fold region. In terms of domain architecture, PKS/mFAS DH spans 1303 to 1619 (QQVRSEQING…FQRLTRRVLA (317 aa)). Catalysis depends on His1335, which acts as the Proton acceptor; for dehydratase activity. A C-terminal hotdog fold region spans residues 1463-1619 (TGHRLPKSVV…FQRLTRRVLA (157 aa)). The active-site Proton donor; for dehydratase activity is Asp1523. A Carrier 1 domain is found at 1666–1742 (VGDEKADAAI…GLRRAISELS (77 aa)). At Ser1702 the chain carries O-(pantetheine 4'-phosphoryl)serine. The interval 1747–1785 (GPASGSVSVSSSATTTHGMTTPSSTSSAQSSQSSQTPDG) is disordered. Low complexity predominate over residues 1749–1783 (ASGSVSVSSSATTTHGMTTPSSTSSAQSSQSSQTP). The 78-residue stretch at 1784-1861 (DGPGIYANAV…HVRRALGSDS (78 aa)) folds into the Carrier 2 domain. Ser1821 is subject to O-(pantetheine 4'-phosphoryl)serine. A disordered region spans residues 1857 to 1878 (LGSDSDGDSKPKSAPAPPAPEP). Positions 1921–2163 (LFFLPDGTGY…TMPCDHLSLL (243 aa)) are thioesterase (TE) domain.

The cofactor is pantetheine 4'-phosphate.

It functions in the pathway secondary metabolite biosynthesis. Its function is as follows. Non-reducing polyketide synthase; part of the gene cluster that mediates the biosynthesis of menisporopsin A, a bioactive macrocyclic polylactone. The biosynthesis of menisporopsin A is performed by a reducing (man1) and a non-reducing (men2) polyketide synthase that catalyze the formation of each menisporopsin A subunits, while the esterification and cyclolactonization activities are probably peformed by the unusual thioesterase domain of men2. First, a reduced diketide intermediate, 3-hydroxybutyryl-S-ACP is produced by men1 and transferred to men2; this is followed by a second reduced diketide which is further elongated using 3 units of malonyl-coA to form a reduced pentaketide. The cyclization of this intermediate by the PT domain forms the second subunit, 2,4-dihydroxy-6-(2-hydroxy-n-propyl)benzoyl-S-ACP. The TE domain of men2 then esterifies the secondary hydroxyl group on the side chain of the second subunit with the acyl-TE of the first subunit to form the first ester intermediate. This process occurs iteratively to form a linear tetraester intermediate. The final subunit is formed by a similar process, except that an extra malonyl-CoA is required in an additional elongation step to form a reduced hexaketide intermediate, and the carbonyl group next to the secondary hydroxyl group is reduced by a trans-acting ketoreductase. Again, the PT domain catalyzes cyclization to form the largest subunit, 2,4-dihydroxy-6-(2,4-dihydroxy-n-pentyl) benzoyl-S-ACP. Then the linear pentaester intermediate is formed. In this step, if the intermediate transfer rate is slow, intra- molecular cyclization involving the secondary hydroxyl group of the pentaester intermediate may occur to form menisporopsin B. Alternatively, transfer of the pentaester intermediate to the TE domain would allow cyclolactonization to be catalyzed by the TE to form menisporopsin A. The polypeptide is Non-reducing polyketide synthase men2 (Menisporopsis theobromae).